We begin with the raw amino-acid sequence, 329 residues long: Uroporphyrinogen decarboxylase (329 aa).

Substrate is bound by residues 22-26 (RQVGR), D71, Y140, S195, and H307.

Belongs to the uroporphyrinogen decarboxylase family. In terms of assembly, homodimer.

The protein resides in the cytoplasm. It carries out the reaction uroporphyrinogen III + 4 H(+) = coproporphyrinogen III + 4 CO2. It participates in porphyrin-containing compound metabolism; protoporphyrin-IX biosynthesis; coproporphyrinogen-III from 5-aminolevulinate: step 4/4. Functionally, catalyzes the decarboxylation of four acetate groups of uroporphyrinogen-III to yield coproporphyrinogen-III. This is Uroporphyrinogen decarboxylase from Chlamydia pneumoniae (Chlamydophila pneumoniae).